A 211-amino-acid polypeptide reads, in one-letter code: Interleukin-6 (211 aa).

Positions 1-29 (MNSLSTSAFSPVAFSLGLLLVMATAFPTP) are cleaved as a signal peptide. A disulfide bond links C71 and C77. A Phosphoserine modification is found at S80. C100 and C110 form a disulfide bridge.

The protein belongs to the IL-6 superfamily. As to quaternary structure, component of a hexamer of two molecules each of IL6, IL6R and IL6ST; first binds to IL6R to associate with the signaling subunit IL6ST. Interacts with IL6R (via the N-terminal ectodomain); this interaction may be affected by IL6R-binding with SORL1, hence decreasing IL6 cis signaling. Interacts with SORL1 (via the N-terminal ectodomain); this interaction leads to IL6 internalization and lysosomal degradation. May form a trimeric complex with the soluble SORL1 ectodomain and soluble IL6R receptor; this interaction might stabilize circulating IL6, hence promoting IL6 trans signaling.

The protein resides in the secreted. Its function is as follows. Cytokine with a wide variety of biological functions in immunity, tissue regeneration, and metabolism. Binds to IL6R, then the complex associates to the signaling subunit IL6ST/gp130 to trigger the intracellular IL6-signaling pathway. The interaction with the membrane-bound IL6R and IL6ST stimulates 'classic signaling', whereas the binding of IL6 and soluble IL6R to IL6ST stimulates 'trans-signaling'. Alternatively, 'cluster signaling' occurs when membrane-bound IL6:IL6R complexes on transmitter cells activate IL6ST receptors on neighboring receiver cells. Functionally, IL6 is a potent inducer of the acute phase response. Rapid production of IL6 contributes to host defense during infection and tissue injury, but excessive IL6 synthesis is involved in disease pathology. In the innate immune response, is synthesized by myeloid cells, such as macrophages and dendritic cells, upon recognition of pathogens through toll-like receptors (TLRs) at the site of infection or tissue injury. In the adaptive immune response, is required for the differentiation of B cells into immunoglobulin-secreting cells. Plays a major role in the differentiation of CD4(+) T cell subsets. Essential factor for the development of T follicular helper (Tfh) cells that are required for the induction of germinal-center formation. Required to drive naive CD4(+) T cells to the Th17 lineage. Also required for proliferation of myeloma cells and the survival of plasmablast cells. Acts as an essential factor in bone homeostasis and on vessels directly or indirectly by induction of VEGF, resulting in increased angiogenesis activity and vascular permeability. Induces, through 'trans-signaling' and synergistically with IL1B and TNF, the production of VEGF. Involved in metabolic controls, is discharged into the bloodstream after muscle contraction increasing lipolysis and improving insulin resistance. 'Trans-signaling' in central nervous system also regulates energy and glucose homeostasis. Mediates, through GLP-1, crosstalk between insulin-sensitive tissues, intestinal L cells and pancreatic islets to adapt to changes in insulin demand. Also acts as a myokine. Plays a protective role during liver injury, being required for maintenance of tissue regeneration. Also has a pivotal role in iron metabolism by regulating HAMP/hepcidin expression upon inflammation or bacterial infection. Through activation of IL6ST-YAP-NOTCH pathway, induces inflammation-induced epithelial regeneration. The protein is Interleukin-6 (IL6) of Camelus bactrianus (Bactrian camel).